Reading from the N-terminus, the 65-residue chain is Large ribosomal subunit protein bL35 (65 aa).

Belongs to the bacterial ribosomal protein bL35 family.

This chain is Large ribosomal subunit protein bL35, found in Pectobacterium atrosepticum (strain SCRI 1043 / ATCC BAA-672) (Erwinia carotovora subsp. atroseptica).